The sequence spans 555 residues: GMP synthase [glutamine-hydrolyzing] (555 aa).

The 227-residue stretch at 8–234 (KILVLNFGSQ…AYNICKCKKQ (227 aa)) folds into the Glutamine amidotransferase type-1 domain. Cysteine 89 functions as the Nucleophile; for GATase activity in the catalytic mechanism. The L-glutamine site is built by glutamine 93, asparagine 169, aspartate 172, and histidine 208. Active-site for GATase activity residues include histidine 208 and glutamate 210. Positions 235 to 430 (FDPIRYHELE…LNLPEEITNR (196 aa)) constitute a GMPS ATP-PPase domain. 262-268 (SGGIDST) provides a ligand contact to ATP. Residues arginine 336, glutamine 476, lysine 547, isoleucine 552, and glutamate 553 each contribute to the XMP site.

Homodimer (via the GMPS ATP-PPase domain). Mg(2+) serves as cofactor.

The enzyme catalyses XMP + L-glutamine + ATP + H2O = GMP + L-glutamate + AMP + diphosphate + 2 H(+). Its pathway is purine metabolism; GMP biosynthesis; GMP from XMP (L-Gln route): step 1/1. The GATase domain is allosterically activated by the binding of substrates, ATP and XMP, to the ATPPase domain, thus ensuring that glutamine hydrolysis occurs only when the ATPPase domain is primed to receive ammonia. Inhibited by Na(+). Inhibited by the reaction product GMP. In terms of biological role, catalyzes the conversion of xanthine monophosphate (XMP) to GMP in the presence of glutamine and ATP through an adenyl-XMP intermediate, which is the final step of de novo synthesis of GMP. The conversion of XMP to GMP involves the coordinated action of the glutamine amidotransferase (GATase) domain that catalyzes the hydrolysis of the amide side chain of glutamine producing ammonia and the ATP pyrophosphatase (ATPPase) domain that catalyzes the synthesis of adenyl-XMP intermediate from ATP. The ammonia produced by the GATase domain is tunnelled to the ATP-PPase domain where it attacks the adenyl-XMP intermediate generating GMP. The sequence is that of GMP synthase [glutamine-hydrolyzing] from Plasmodium falciparum (isolate 3D7).